A 199-amino-acid chain; its full sequence is Transcriptional regulatory protein EntR (199 aa).

One can recognise a Response regulatory domain in the interval 3-124 (KILVIDRCHF…TLSHTIQEAL (122 aa)). Residue Asp-8 is modified to 4-aspartylphosphate. The region spanning 133-198 (PKNATPLLTP…SPFLSLPGKG (66 aa)) is the HTH luxR-type domain. The H-T-H motif DNA-binding region spans 157 to 176 (NNAIAAALSIHGKTVYTYKR).

Its function is as follows. May serve to repress the entericidin locus in C.freundii. The protein is Transcriptional regulatory protein EntR (ecnR) of Citrobacter freundii.